The primary structure comprises 428 residues: MIFAQEKFVDQGQGKWTVTIQDDQWTEFLKKAKNRLKTNLVVPGFRKGKAPESETAKYLTPIKIYNEAFKIVVKPAFDFALSQENKIQNDNSPTPVIVKVSDKEIVIDFIFDLVLELKVGEYKNITTVKKPVVEVNQEDVDNVIDMYRSRFAMQKEKQADDQIQKGDIVTFDFKGYVDDQAFEGGEAKDFVLEIGSNQFVPGFEDSMIGLKVGENQEINVKFPEEYIPSLAGKDAKFVLNIKNIKEKILPAKDDELVKDLNLPDITTYEQLEQKVKEDVLEQKTKISKSEFVENIIDEIIKTSEFQIPKTIIERQIKDVKKEFEDQLAQQKITLDKYKEITKITQEEIDEELKSDAIHRIKSFLVASEIKNKENIVASEEAINAKFEEFANLYGIEADKIKSLIDNQAIKHQVESELLETFIFENNGN.

The 85-residue stretch at 166–250 (GDIVTFDFKG…IKNIKEKILP (85 aa)) folds into the PPIase FKBP-type domain.

Belongs to the FKBP-type PPIase family. Tig subfamily.

It is found in the cytoplasm. The enzyme catalyses [protein]-peptidylproline (omega=180) = [protein]-peptidylproline (omega=0). Its function is as follows. Involved in protein export. Acts as a chaperone by maintaining the newly synthesized protein in an open conformation. Functions as a peptidyl-prolyl cis-trans isomerase. This Mycoplasma mycoides subsp. mycoides SC (strain CCUG 32753 / NCTC 10114 / PG1) protein is Trigger factor.